Here is a 427-residue protein sequence, read N- to C-terminus: uncharacterized protein (427 aa).

The next 3 membrane-spanning stretches (helical) occupy residues 10–30 (LAYL…AGFW), 43–63 (KIIS…SKLA), and 71–91 (IFEI…SFIS). At threonine 199 the chain carries Phosphothreonine. Serine 234 is modified (phosphoserine). Helical transmembrane passes span 253–273 (NLNP…IGPL), 288–308 (FAEA…VVLG), 327–347 (LLIG…LPII), 358–378 (ILDD…PPAI), and 397–417 (ILFW…VSGA).

The protein belongs to the auxin efflux carrier (TC 2.A.69) family.

Its subcellular location is the membrane. This is an uncharacterized protein from Saccharomyces cerevisiae (strain ATCC 204508 / S288c) (Baker's yeast).